Here is a 191-residue protein sequence, read N- to C-terminus: Large ribosomal subunit protein uL29m (191 aa).

Belongs to the universal ribosomal protein uL29 family. In terms of assembly, component of the mitochondrial large ribosomal subunit. Mature mitochondrial ribosomes consist of a small (37S) and a large (54S) subunit. The 37S subunit contains at least 33 different proteins and 1 molecule of RNA (15S). The 54S subunit contains at least 45 different proteins and 1 molecule of RNA (21S).

The protein resides in the mitochondrion. In Sclerotinia sclerotiorum (strain ATCC 18683 / 1980 / Ss-1) (White mold), this protein is Large ribosomal subunit protein uL29m (MRPL4).